The primary structure comprises 226 residues: Thiamine-phosphate synthase (226 aa).

4-amino-2-methyl-5-(diphosphooxymethyl)pyrimidine contacts are provided by residues 46 to 50 (QLRDK) and Asn87. Asp88 and Asp107 together coordinate Mg(2+). Ser126 is a binding site for 4-amino-2-methyl-5-(diphosphooxymethyl)pyrimidine. Residue 152–154 (TPT) participates in 2-[(2R,5Z)-2-carboxy-4-methylthiazol-5(2H)-ylidene]ethyl phosphate binding. A 4-amino-2-methyl-5-(diphosphooxymethyl)pyrimidine-binding site is contributed by Lys155. Gly183 serves as a coordination point for 2-[(2R,5Z)-2-carboxy-4-methylthiazol-5(2H)-ylidene]ethyl phosphate.

This sequence belongs to the thiamine-phosphate synthase family. It depends on Mg(2+) as a cofactor.

It carries out the reaction 2-[(2R,5Z)-2-carboxy-4-methylthiazol-5(2H)-ylidene]ethyl phosphate + 4-amino-2-methyl-5-(diphosphooxymethyl)pyrimidine + 2 H(+) = thiamine phosphate + CO2 + diphosphate. The enzyme catalyses 2-(2-carboxy-4-methylthiazol-5-yl)ethyl phosphate + 4-amino-2-methyl-5-(diphosphooxymethyl)pyrimidine + 2 H(+) = thiamine phosphate + CO2 + diphosphate. The catalysed reaction is 4-methyl-5-(2-phosphooxyethyl)-thiazole + 4-amino-2-methyl-5-(diphosphooxymethyl)pyrimidine + H(+) = thiamine phosphate + diphosphate. It functions in the pathway cofactor biosynthesis; thiamine diphosphate biosynthesis; thiamine phosphate from 4-amino-2-methyl-5-diphosphomethylpyrimidine and 4-methyl-5-(2-phosphoethyl)-thiazole: step 1/1. Condenses 4-methyl-5-(beta-hydroxyethyl)thiazole monophosphate (THZ-P) and 2-methyl-4-amino-5-hydroxymethyl pyrimidine pyrophosphate (HMP-PP) to form thiamine monophosphate (TMP). The polypeptide is Thiamine-phosphate synthase (Mycobacterium sp. (strain JLS)).